Reading from the N-terminus, the 95-residue chain is Large ribosomal subunit protein bL27 (95 aa).

Residues 1-9 constitute a propeptide that is removed on maturation; the sequence is MLNMNLQFF.

Belongs to the bacterial ribosomal protein bL27 family. Post-translationally, the N-terminus is cleaved by ribosomal processing cysteine protease Prp.

This is Large ribosomal subunit protein bL27 from Agathobacter rectalis (strain ATCC 33656 / DSM 3377 / JCM 17463 / KCTC 5835 / VPI 0990) (Eubacterium rectale).